The following is a 338-amino-acid chain: Dihydroorotate dehydrogenase (quinone) (338 aa).

Residues 68-72 and Thr92 each bind FMN; that span reads AGMDK. Lys72 serves as a coordination point for substrate. 117–121 is a substrate binding site; sequence NRMGF. Residues Ser147 and Asn180 each coordinate FMN. Asn180 is a binding site for substrate. Catalysis depends on Ser183, which acts as the Nucleophile. Residue Asn185 coordinates substrate. Positions 214 and 242 each coordinate FMN. 243–244 contributes to the substrate binding site; the sequence is NT. FMN is bound by residues Gly267, Gly296, and 317–318; that span reads YT.

It belongs to the dihydroorotate dehydrogenase family. Type 2 subfamily. Monomer. The cofactor is FMN.

It localises to the cell membrane. It catalyses the reaction (S)-dihydroorotate + a quinone = orotate + a quinol. It functions in the pathway pyrimidine metabolism; UMP biosynthesis via de novo pathway; orotate from (S)-dihydroorotate (quinone route): step 1/1. Functionally, catalyzes the conversion of dihydroorotate to orotate with quinone as electron acceptor. This chain is Dihydroorotate dehydrogenase (quinone), found in Salinispora arenicola (strain CNS-205).